Here is a 460-residue protein sequence, read N- to C-terminus: V-type ATP synthase beta chain (460 aa).

It belongs to the ATPase alpha/beta chains family.

Functionally, produces ATP from ADP in the presence of a proton gradient across the membrane. The V-type beta chain is a regulatory subunit. The protein is V-type ATP synthase beta chain of Clostridium novyi (strain NT).